The chain runs to 366 residues: MLNIKCIPRKALVLVLGGGMILPNISPAMINDTAGCAGAGISYPYIAGANDNPLFISSDHRPTNNINQVMMMEIIRTINNQTTFQTVRAARHHIIPYQVLRDFYNAVITRGQSNPLELRTFGQILLHLVDNASRLYQNTISLSQLDDARSVALDFMHGVVLGDETRFSEQQVSGLYAIRTLFTWFPANIFIGPDTSYRFDDPGNGFEWNARSIVGAENFNRLEALHNLMVAYINKRNTLDHGWSVIMLARMVSMVSLFKALDNVVTISNAQNWFEPPDWYGDERVGIGFNGRVEYVDVQNLNPPENMRKKRENKNNFIVKRLPTIADPYCLMAPKIVKKKLVASLFTDINPDLNTNKEPKHDELRK.

The chain is Putative protein p9 (9) from Acyrthosiphon pisum secondary endosymbiont phage 1 (Bacteriophage APSE-1).